The sequence spans 1278 residues: NPC intracellular cholesterol transporter 1 (1278 aa).

Residues 1 to 22 (MTARGLALGLLLLLLCPAQVFS) form the signal peptide. Over 23–261 (QSCVWYGECG…QPPPPPAPWT (239 aa)) the chain is Lumenal. 9 cysteine pairs are disulfide-bonded: C25-C74, C31-C42, C63-C109, C75-C113, C97-C238, C100-C160, C177-C184, C227-C243, and C240-C247. Residue N41 participates in cholesterol binding. An N-linked (GlcNAc...) asparagine glycan is attached at N70. Position 79 (Q79) interacts with cholesterol. N-linked (GlcNAc...) asparagine glycans are attached at residues N122 and N135. N158 is a glycosylation site (N-linked (GlcNAc...) asparagine; atypical). The interval 175–205 (LLCGKDADACNATNWIEYMFNKDNGQAPFTI) is important for cholesterol binding and cholesterol transfer from NPC1 to liposomes. 2 N-linked (GlcNAc...) asparagine glycosylation sites follow: N185 and N222. A helical membrane pass occupies residues 262-282 (ILGLDAMYVIMWITYMAFLLV). Residues 283–350 (FFGAFFAVWC…RWGSFCVRNP (68 aa)) lie on the Cytoplasmic side of the membrane. The helical transmembrane segment at 351–371 (GCVIFFSLVFITACSSGLVFV) threads the bilayer. The Lumenal segment spans residues 372–620 (RVTTNPVDLW…DELNRESDSD (249 aa)). N-linked (GlcNAc...) asparagine glycosylation is found at N452, N459, N478, N524, N557, N572, and N598. 2 disulfides stabilise this stretch: C468/C479 and C516/C533. The SSD domain occupies 620–785 (DVFTVVISYA…ITCFVSLLGL (166 aa)). The chain crosses the membrane as a helical span at residues 621-641 (VFTVVISYAIMFLYISLALGH). Over 642–653 (MKSCRRLLVDSK) the chain is Cytoplasmic. The helical transmembrane segment at 654 to 675 (VSLGIAGILIVLSSVACSLGVF) threads the bilayer. Over 676 to 685 (SYIGLPLTLI) the chain is Lumenal. Residues 686–706 (VIEVIPFLVLAVGVDNIFILV) form a helical membrane-spanning segment. Residues 707 to 730 (QAYQRDERLQGETLDQQLGRVLGE) lie on the Cytoplasmic side of the membrane. Residues 731–751 (VAPSMFLSSFSETVAFFLGAL) traverse the membrane as a helical segment. Residues 752–759 (SVMPAVHT) are Lumenal-facing. Residues 760–783 (FSLFAGLAVFIDFLLQITCFVSLL) form a helical membrane-spanning segment. Over 784 to 832 (GLDIKRQEKNRLDIFCCVRGAEDGTSVQASESCLFRFFKNSYSPLLLKD) the chain is Cytoplasmic. The helical transmembrane segment at 833 to 853 (WMRPIVIAIFVGVLSFSIAVL) threads the bilayer. Topologically, residues 854–1097 (NKVDIGLDQS…YEQYLTIIDD (244 aa)) are lumenal. C909 and C914 are joined by a disulfide. 6 N-linked (GlcNAc...) asparagine glycosylation sites follow: N916, N931, N961, N968, N1064, and N1072. 3 disulfide bridges follow: C956/C1011, C957/C979, and C967/C976. A helical transmembrane segment spans residues 1098-1118 (TIFNLGVSLGAIFLVTMVLLG). Residues 1119–1124 (CELWSA) are Cytoplasmic-facing. The helical transmembrane segment at 1125–1145 (VIMCATIAMVLVNMFGVMWLW) threads the bilayer. Residues 1146–1150 (GISLN) are Lumenal-facing. A helical membrane pass occupies residues 1151–1171 (AVSLVNLVMSCGISVEFCSHI). Over 1172–1194 (TRAFTVSMKGSRVERAEEALAHM) the chain is Cytoplasmic. Residues 1195–1215 (GSSVFSGITLTKFGGIVVLAF) traverse the membrane as a helical segment. Residues 1216–1223 (AKSQIFQI) lie on the Lumenal side of the membrane. The chain crosses the membrane as a helical span at residues 1224 to 1244 (FYFRMYLAMVLLGATHGLIFL). The Cytoplasmic portion of the chain corresponds to 1245–1278 (PVLLSYIGPSVNKAKSCATEERYKGTERERLLNF). Residues 1275 to 1278 (LLNF) are required for location in lysosomes. The Di-leucine motif motif lies at 1275-1278 (LLNF).

It belongs to the patched family. As to quaternary structure, interacts (via the second lumenal domain) with NPC2. Interacts with TMEM97; the interaction may decrease NPC1 availability to the cell. Interacts with TIM1. Interacts with SLC38A9; this interaction inhibits cholesterol-mediated mTORC1 activation via its sterol transport activity. (Microbial infection) Interacts with ebolavirus glycoprotein. In terms of processing, N-glycosylated.

The protein resides in the late endosome membrane. Its subcellular location is the lysosome membrane. It carries out the reaction cholesterol(in) = cholesterol(out). In terms of biological role, intracellular cholesterol transporter which acts in concert with NPC2 and plays an important role in the egress of cholesterol from the endosomal/lysosomal compartment. Unesterified cholesterol that has been released from LDLs in the lumen of the late endosomes/lysosomes is transferred by NPC2 to the cholesterol-binding pocket in the N-terminal domain of NPC1. Cholesterol binds to NPC1 with the hydroxyl group buried in the binding pocket. Binds oxysterol with higher affinity than cholesterol. May play a role in vesicular trafficking in glia, a process that may be crucial for maintaining the structural and functional integrity of nerve terminals. Inhibits cholesterol-mediated mTORC1 activation throught its interaction with SLC38A9. Functionally, (Microbial infection) Acts as an endosomal entry receptor for ebolavirus. The protein is NPC intracellular cholesterol transporter 1 of Homo sapiens (Human).